A 157-amino-acid polypeptide reads, in one-letter code: Protein Smg homolog (157 aa).

Belongs to the Smg family.

In Xylella fastidiosa (strain M23), this protein is Protein Smg homolog.